The primary structure comprises 917 residues: Autophagy-related protein 9 (917 aa).

Residues 1-226 (MASNIFSRLV…AGFWCIIVQR (226 aa)) are Cytoplasmic-facing. Disordered regions lie at residues 16–37 (RSFY…RAGI) and 119–177 (LLLS…QGRP). The chain crosses the membrane as a helical span at residues 227–247 (ILELVNAAFVAVFLTFLSQCV). Over 248–275 (DYHKLPHSKKMEDIIIPKCTQNMSLVWN) the chain is Lumenal. Residue Asn269 is glycosylated (N-linked (GlcNAc...) asparagine). The chain crosses the membrane as a helical span at residues 276 to 296 (VGLWLFAIYFICRCFGLIIQL). Over 297–442 (RQLKHLRDFY…RQLSQKLKSR (146 aa)) the chain is Cytoplasmic. An intramembrane segment occupies 443–463 (FFFAGLMIFVMSPFIALYLIL). Residues 464 to 539 (VYFLTYFHEF…ARTVSFITGS (76 aa)) lie on the Cytoplasmic side of the membrane. The helical transmembrane segment at 540–560 (IVAVLGLATIFDSEAFLTFEI) threads the bilayer. Over 561 to 564 (TPDR) the chain is Lumenal. The helical transmembrane segment at 565–585 (SVLFYVSILATLWAVARGNIS) threads the bilayer. Residues 586 to 633 (DDNEVYDPEFAMKSIIEFTHYEPDHWRGRLHSTEVKNEFSELYKPRPQ) are Cytoplasmic-facing. Lys621 is modified (N6-acetyllysine). The stretch at 634-654 (IFLEEILSILLTPLVLLVSLP) is an intramembrane region. Residues 655 to 917 (NSTDQIVDFF…FQQAHMHLRR (263 aa)) lie on the Cytoplasmic side of the membrane. Residues 854 to 895 (DARFGKLGDEDIDESGGALDESTWQTSPTKTLSRENSGANPQ) form a disordered region. Positions 875–895 (STWQTSPTKTLSRENSGANPQ) are enriched in polar residues.

This sequence belongs to the ATG9 family. In terms of assembly, homotrimer; forms a homotrimer with a central pore that forms a path between the two membrane leaflets. Interacts with HAT1. Post-translationally, acetylated by HAT1 at Lys-621, which increases the ability to bind vesicles during nutrient starvation induction. Phosphorylated by ATG1. ATG1 phosphorylation is required for preautophagosome elongation.

It is found in the preautophagosomal structure membrane. The protein localises to the cytoplasmic vesicle membrane. Its subcellular location is the vacuole membrane. It localises to the golgi apparatus membrane. The protein resides in the endoplasmic reticulum membrane. It carries out the reaction a 1,2-diacyl-sn-glycero-3-phosphocholine(in) = a 1,2-diacyl-sn-glycero-3-phosphocholine(out). The catalysed reaction is a 1,2-diacyl-sn-glycero-3-phospho-L-serine(in) = a 1,2-diacyl-sn-glycero-3-phospho-L-serine(out). It catalyses the reaction a 1,2-diacyl-sn-glycero-3-phosphoethanolamine(in) = a 1,2-diacyl-sn-glycero-3-phosphoethanolamine(out). The enzyme catalyses a 1,2-diacyl-sn-glycero-3-phospho-(1D-myo-inositol-3-phosphate)(in) = a 1,2-diacyl-sn-glycero-3-phospho-(1D-myo-inositol-3-phosphate)(out). Phospholipid scramblase involved in autophagy and cytoplasm to vacuole transport (Cvt) vesicle formation. Cycles between the preautophagosomal structure/phagophore assembly site (PAS) and the cytoplasmic vesicle pool and supplies membrane for the growing autophagosome. Lipid scramblase activity plays a key role in preautophagosomal structure/phagophore assembly by distributing the phospholipids that arrive through ATG2 from the cytoplasmic to the luminal leaflet of the bilayer, thereby driving autophagosomal membrane expansion. Required for mitophagy. Also involved in endoplasmic reticulum-specific autophagic process and is essential for the survival of cells subjected to severe ER stress. Different machineries are required for anterograde trafficking to the PAS during either the Cvt pathway or bulk autophagy and for retrograde trafficking. Plays a role in appressorium formation and pathogenicity. The protein is Autophagy-related protein 9 of Pyricularia oryzae (strain 70-15 / ATCC MYA-4617 / FGSC 8958) (Rice blast fungus).